Reading from the N-terminus, the 198-residue chain is Autophagy-related protein 33 (198 aa).

3 consecutive transmembrane segments (helical) span residues 17–37, 60–80, and 86–106; these read VSLG…LPAL, PVLA…FLAP, and PYLL…ILIP. The interval 111–147 is disordered; that stretch reads APRRTASSAPRKSSRAKMEASYEVLGDAHSEPASDED. A compositionally biased stretch (low complexity) spans 112 to 121; sequence PRRTASSAPR. The segment covering 126 to 142 has biased composition (basic and acidic residues); that stretch reads AKMEASYEVLGDAHSEP. The helical transmembrane segment at 171–191 threads the bilayer; sequence TAISALGFAMAVVGIWGDGAP.

The protein belongs to the ATG33 family.

The protein resides in the mitochondrion membrane. Involved in the selective degradation of mitochondria via autophagy during starvation and at post-log phase. Autophagy is required for proper vegetative growth, asexual/sexual reproduction, and full virulence. Autophagy is particularly involved in the biosynthesis of deoxynivalenol (DON), an important virulence determinant. In Gibberella zeae (strain ATCC MYA-4620 / CBS 123657 / FGSC 9075 / NRRL 31084 / PH-1) (Wheat head blight fungus), this protein is Autophagy-related protein 33.